The chain runs to 667 residues: Bifunctional polymyxin resistance protein ArnA (667 aa).

Residues 1–304 (MKAIVFAYHD…EMGIVTDVRL (304 aa)) are formyltransferase ArnAFT. H104 acts as the Proton donor; for formyltransferase activity in catalysis. (6R)-10-formyltetrahydrofolate contacts are provided by residues R114 and 136-140 (VKKAD). Positions 314-667 (RRTRVLILGV…TAAPKDELNA (354 aa)) are dehydrogenase ArnADH. NAD(+) contacts are provided by residues D347 and 368 to 369 (DI). Residues A393, Y398, and 432 to 433 (TS) each bind UDP-alpha-D-glucuronate. Catalysis depends on E434, which acts as the Proton acceptor; for decarboxylase activity. Residues R460, N492, 526–535 (KLVDGGAQKR), and Y613 each bind UDP-alpha-D-glucuronate. The Proton donor; for decarboxylase activity role is filled by R619.

It in the N-terminal section; belongs to the Fmt family. UDP-L-Ara4N formyltransferase subfamily. In the C-terminal section; belongs to the NAD(P)-dependent epimerase/dehydratase family. UDP-glucuronic acid decarboxylase subfamily. As to quaternary structure, homohexamer, formed by a dimer of trimers.

The catalysed reaction is UDP-alpha-D-glucuronate + NAD(+) = UDP-beta-L-threo-pentopyranos-4-ulose + CO2 + NADH. It catalyses the reaction UDP-4-amino-4-deoxy-beta-L-arabinose + (6R)-10-formyltetrahydrofolate = UDP-4-deoxy-4-formamido-beta-L-arabinose + (6S)-5,6,7,8-tetrahydrofolate + H(+). Its pathway is nucleotide-sugar biosynthesis; UDP-4-deoxy-4-formamido-beta-L-arabinose biosynthesis; UDP-4-deoxy-4-formamido-beta-L-arabinose from UDP-alpha-D-glucuronate: step 1/3. It participates in nucleotide-sugar biosynthesis; UDP-4-deoxy-4-formamido-beta-L-arabinose biosynthesis; UDP-4-deoxy-4-formamido-beta-L-arabinose from UDP-alpha-D-glucuronate: step 3/3. The protein operates within bacterial outer membrane biogenesis; lipopolysaccharide biosynthesis. Its function is as follows. Bifunctional enzyme that catalyzes the oxidative decarboxylation of UDP-glucuronic acid (UDP-GlcUA) to UDP-4-keto-arabinose (UDP-Ara4O) and the addition of a formyl group to UDP-4-amino-4-deoxy-L-arabinose (UDP-L-Ara4N) to form UDP-L-4-formamido-arabinose (UDP-L-Ara4FN). The modified arabinose is attached to lipid A and is required for resistance to polymyxin and cationic antimicrobial peptides. The polypeptide is Bifunctional polymyxin resistance protein ArnA (Yersinia pseudotuberculosis serotype IB (strain PB1/+)).